Consider the following 241-residue polypeptide: Large ribosomal subunit protein uL13c (241 aa).

The N-terminal 50 residues, 1-50 (MAVLCSSSTVILSSSSVKSSGSERKSPFLGFSLTAISKPSVRVGIYANSK), are a transit peptide targeting the chloroplast.

It belongs to the universal ribosomal protein uL13 family. As to quaternary structure, part of the 50S ribosomal subunit.

The protein resides in the plastid. Its subcellular location is the chloroplast. In Arabidopsis thaliana (Mouse-ear cress), this protein is Large ribosomal subunit protein uL13c (RPL13).